The chain runs to 62 residues: HSEGTFTSDYSKYMDNRRAKDFVQWLMSTKRNGHAEGTYTSDVDSLSDYFKAKRFVDSLKSY.

The protein belongs to the glucagon family.

Its subcellular location is the secreted. Promotes hydrolysis of glycogen and lipids, and raises the blood sugar level. The sequence is that of Glucagon (gcg) from Scyliorhinus canicula (Small-spotted catshark).